Consider the following 213-residue polypeptide: MANQSEKIPRATLKRLPLYYRFVNTLKSKGIDRVNSKAISEGLNIDSATIRRDFSYFGELGKKGYGYNIDSLLHFFKNEISENDEIKIAIVGVGNLGKALLTYNFSIHDEMTITEAFDIREEVIGTQIGKVTVSPFEKITDILSHEQIDVVILTTPEEAAQKVADTLVKAGVKGILNFTPSRVQTPSDVQVHHIDLGIELQSLLFFMKNYSHK.

The H-T-H motif DNA-binding region spans Leu18–Phe57. NAD(+) is bound at residue Gly92–Gly97.

The protein belongs to the transcriptional regulatory Rex family. In terms of assembly, homodimer.

The protein resides in the cytoplasm. Functionally, modulates transcription in response to changes in cellular NADH/NAD(+) redox state. This is Redox-sensing transcriptional repressor Rex from Staphylococcus saprophyticus subsp. saprophyticus (strain ATCC 15305 / DSM 20229 / NCIMB 8711 / NCTC 7292 / S-41).